A 425-amino-acid polypeptide reads, in one-letter code: D-amino acid dehydrogenase (425 aa).

3 to 17 (VLVMGAGVIGVTTAY) provides a ligand contact to FAD.

It belongs to the DadA oxidoreductase family. The cofactor is FAD.

The enzyme catalyses a D-alpha-amino acid + A + H2O = a 2-oxocarboxylate + AH2 + NH4(+). Its pathway is amino-acid degradation; D-alanine degradation; NH(3) and pyruvate from D-alanine: step 1/1. Oxidative deamination of D-amino acids. This chain is D-amino acid dehydrogenase, found in Rhodopseudomonas palustris (strain HaA2).